A 493-amino-acid polypeptide reads, in one-letter code: Guanosine-5'-triphosphate,3'-diphosphate pyrophosphatase (493 aa).

Belongs to the GppA/Ppx family. GppA subfamily.

It carries out the reaction guanosine 3'-diphosphate 5'-triphosphate + H2O = guanosine 3',5'-bis(diphosphate) + phosphate + H(+). It participates in purine metabolism; ppGpp biosynthesis; ppGpp from GTP: step 2/2. In terms of biological role, catalyzes the conversion of pppGpp to ppGpp. Guanosine pentaphosphate (pppGpp) is a cytoplasmic signaling molecule which together with ppGpp controls the 'stringent response', an adaptive process that allows bacteria to respond to amino acid starvation, resulting in the coordinated regulation of numerous cellular activities. This Salmonella heidelberg (strain SL476) protein is Guanosine-5'-triphosphate,3'-diphosphate pyrophosphatase.